Here is a 620-residue protein sequence, read N- to C-terminus: 1-deoxy-D-xylulose-5-phosphate synthase (620 aa).

Residues H80 and 121–123 contribute to the thiamine diphosphate site; that span reads GHS. D152 lines the Mg(2+) pocket. Residues 153 to 154, N181, Y288, and E370 contribute to the thiamine diphosphate site; that span reads GA. A Mg(2+)-binding site is contributed by N181.

It belongs to the transketolase family. DXPS subfamily. Homodimer. It depends on Mg(2+) as a cofactor. Thiamine diphosphate serves as cofactor.

The enzyme catalyses D-glyceraldehyde 3-phosphate + pyruvate + H(+) = 1-deoxy-D-xylulose 5-phosphate + CO2. It functions in the pathway metabolic intermediate biosynthesis; 1-deoxy-D-xylulose 5-phosphate biosynthesis; 1-deoxy-D-xylulose 5-phosphate from D-glyceraldehyde 3-phosphate and pyruvate: step 1/1. Functionally, catalyzes the acyloin condensation reaction between C atoms 2 and 3 of pyruvate and glyceraldehyde 3-phosphate to yield 1-deoxy-D-xylulose-5-phosphate (DXP). The polypeptide is 1-deoxy-D-xylulose-5-phosphate synthase (Escherichia coli O6:K15:H31 (strain 536 / UPEC)).